Reading from the N-terminus, the 301-residue chain is Probable alpha-L-glutamate ligase (301 aa).

The ATP-grasp domain maps to 104 to 287; the sequence is LQLLSRRGIG…VAGMIIEHLE (184 aa). ATP contacts are provided by residues lysine 141, 178–179, aspartate 187, and 211–213; these read EY and RSN. Residues aspartate 248, glutamate 260, and asparagine 262 each coordinate Mg(2+). Aspartate 248, glutamate 260, and asparagine 262 together coordinate Mn(2+).

It belongs to the RimK family. Mg(2+) serves as cofactor. It depends on Mn(2+) as a cofactor.

This is Probable alpha-L-glutamate ligase from Pseudomonas putida (strain ATCC 700007 / DSM 6899 / JCM 31910 / BCRC 17059 / LMG 24140 / F1).